Here is a 512-residue protein sequence, read N- to C-terminus: Lysine--tRNA ligase (512 aa).

Mg(2+) is bound by residues E422 and E429.

It belongs to the class-II aminoacyl-tRNA synthetase family. Homodimer. Requires Mg(2+) as cofactor.

It localises to the cytoplasm. It carries out the reaction tRNA(Lys) + L-lysine + ATP = L-lysyl-tRNA(Lys) + AMP + diphosphate. The polypeptide is Lysine--tRNA ligase (Paraburkholderia phymatum (strain DSM 17167 / CIP 108236 / LMG 21445 / STM815) (Burkholderia phymatum)).